A 371-amino-acid polypeptide reads, in one-letter code: Cytochrome b (371 aa).

Helical transmembrane passes span 25–45 (FGSM…FLAV), 69–90 (WMMQ…YIHI), 105–125 (WMSG…GYVL), and 170–190 (FFAL…LHII). 2 residues coordinate heme b: histidine 75 and histidine 89. Histidine 174 and histidine 188 together coordinate heme b. Histidine 193 contributes to the a ubiquinone binding site. Transmembrane regions (helical) follow at residues 218–238 (HKDL…MSFF), 280–300 (LGGA…PFTH), 312–332 (LSQL…WAAT), and 339–358 (FIII…LSFP).

It belongs to the cytochrome b family. In terms of assembly, the cytochrome bc1 complex contains 3 respiratory subunits (MT-CYB, CYC1 and UQCRFS1), 2 core proteins (UQCRC1 and UQCRC2) and probably 6 low-molecular weight proteins. It depends on heme b as a cofactor.

It localises to the mitochondrion inner membrane. In terms of biological role, component of the ubiquinol-cytochrome c reductase complex (complex III or cytochrome b-c1 complex) that is part of the mitochondrial respiratory chain. The b-c1 complex mediates electron transfer from ubiquinol to cytochrome c. Contributes to the generation of a proton gradient across the mitochondrial membrane that is then used for ATP synthesis. This is Cytochrome b (MT-CYB) from Apodora papuana (Papuan olive python).